Here is a 298-residue protein sequence, read N- to C-terminus: uncharacterized protein (298 aa).

This is an uncharacterized protein from Ictalurid herpesvirus 1 (strain Auburn) (IcHV-1).